A 215-amino-acid polypeptide reads, in one-letter code: Pyridoxine/pyridoxamine 5'-phosphate oxidase (215 aa).

Residues R8 to Y11 and K66 each bind substrate. FMN contacts are provided by residues R61–K66, Y76–T77, R82, K83, and Q105. Y123 and R127 together coordinate substrate. FMN-binding positions include Q140–S141 and W186. R192–H194 serves as a coordination point for substrate. Position 196 (R196) interacts with FMN.

It belongs to the pyridoxamine 5'-phosphate oxidase family. In terms of assembly, homodimer. FMN is required as a cofactor.

It carries out the reaction pyridoxamine 5'-phosphate + O2 + H2O = pyridoxal 5'-phosphate + H2O2 + NH4(+). The catalysed reaction is pyridoxine 5'-phosphate + O2 = pyridoxal 5'-phosphate + H2O2. Its pathway is cofactor metabolism; pyridoxal 5'-phosphate salvage; pyridoxal 5'-phosphate from pyridoxamine 5'-phosphate: step 1/1. It participates in cofactor metabolism; pyridoxal 5'-phosphate salvage; pyridoxal 5'-phosphate from pyridoxine 5'-phosphate: step 1/1. Catalyzes the oxidation of either pyridoxine 5'-phosphate (PNP) or pyridoxamine 5'-phosphate (PMP) into pyridoxal 5'-phosphate (PLP). The sequence is that of Pyridoxine/pyridoxamine 5'-phosphate oxidase from Salinibacter ruber (strain DSM 13855 / M31).